The following is a 1161-amino-acid chain: Cingulin (1161 aa).

The interval 1–403 is head; sequence MSSLSADRKP…SLIHERFCGV (403 aa). Disordered regions lie at residues 29 to 53, 79 to 309, 649 to 678, 699 to 721, 739 to 773, and 1123 to 1161; these read GGFP…SPSK, SYGV…LGRD, QSEL…KRET, SKAI…ESNL, RLHS…AASR, and QSRR…TTSC. Residues 51-65 carry the ZIM motif; that stretch reads PSKYGVAVRVQGISG. 2 stretches are compositionally biased toward polar residues: residues 84 to 104 and 117 to 129; these read LKTQ…SPYN and PQGS…QPSS. The span at 189 to 203 shows a compositional bias: low complexity; that stretch reads NGIGSSLNGTGLNGS. Residues 273-305 show a composition bias toward polar residues; that stretch reads EASSTSPTINPYAPNTSATVPKLNSTKPSSTGS. The stretch at 413-1128 forms a coiled coil; sequence SNMKTELEQA…RKIQQSRRST (716 aa). Positions 742–751 are enriched in low complexity; sequence SSVPDSSSSD. The segment covering 755 to 773 has biased composition (basic and acidic residues); that stretch reads EENRSLKTQLEESRRAASR. The tract at residues 1122-1161 is tail; sequence QQSRRSTLGSTLSSDEEDNYSDTKSITSILTDSPLQTTSC. Low complexity predominate over residues 1124 to 1134; sequence SRRSTLGSTLS. Residues 1143–1161 are compositionally biased toward polar residues; it reads DTKSITSILTDSPLQTTSC.

The protein belongs to the cingulin family. Homodimer.

The protein localises to the cell junction. It is found in the tight junction. In terms of biological role, probably plays a role in the formation and regulation of the tight junction (TJ) paracellular permeability barrier. Note=Localizes to the apical junction complex composed of tight and adherens junctions. This is Cingulin from Danio rerio (Zebrafish).